A 406-amino-acid chain; its full sequence is Tyrosine--tRNA ligase (406 aa).

Y35 contacts L-tyrosine. The short motif at 40–49 (PTADSLHVGH) is the 'HIGH' region element. Residues Y168 and Q172 each coordinate L-tyrosine. The 'KMSKS' region motif lies at 228–232 (KMGKT). K231 provides a ligand contact to ATP. One can recognise an S4 RNA-binding domain in the interval 340–404 (AELLDILVEA…RGKKNYNKIV (65 aa)).

This sequence belongs to the class-I aminoacyl-tRNA synthetase family. TyrS type 1 subfamily. Homodimer.

It localises to the cytoplasm. The enzyme catalyses tRNA(Tyr) + L-tyrosine + ATP = L-tyrosyl-tRNA(Tyr) + AMP + diphosphate + H(+). In terms of biological role, catalyzes the attachment of tyrosine to tRNA(Tyr) in a two-step reaction: tyrosine is first activated by ATP to form Tyr-AMP and then transferred to the acceptor end of tRNA(Tyr). The polypeptide is Tyrosine--tRNA ligase (Clostridium perfringens (strain 13 / Type A)).